Here is a 185-residue protein sequence, read N- to C-terminus: MSSFIDSIKSTSLSRALTIALGSNNFKSASTINDCKMGLYSSRLLAIPDNFSLVSSNIPSSDCSRAERTFNLILFAIVDLVICCESMAFFNLLLKLPSMLLVSFLTMLVFSISYSWSAFNWISFAFSSASFLMKACILFNSSFTWFGVKAVIAEDMLYRMVRGLFCASFVKQLQTTFLATAIVLC.

Over 1 to 69 (MSSFIDSIKS…SSDCSRAERT (69 aa)) the chain is Cytoplasmic. Residues 70–90 (FNLILFAIVDLVICCESMAFF) traverse the membrane as a helical segment. Asparagine 91 is a topological domain (extracellular). The chain crosses the membrane as a helical span at residues 92–112 (LLLKLPSMLLVSFLTMLVFSI). Residues 113–118 (SYSWSA) are Cytoplasmic-facing. The helical transmembrane segment at 119 to 139 (FNWISFAFSSASFLMKACILF) threads the bilayer. The Extracellular portion of the chain corresponds to 140–185 (NSSFTWFGVKAVIAEDMLYRMVRGLFCASFVKQLQTTFLATAIVLC).

It localises to the membrane. This is an uncharacterized protein from Saccharomyces cerevisiae (strain ATCC 204508 / S288c) (Baker's yeast).